A 272-amino-acid polypeptide reads, in one-letter code: Ribosomal RNA small subunit methyltransferase A (272 aa).

S-adenosyl-L-methionine contacts are provided by N18, L20, G45, E66, D91, and N113.

It belongs to the class I-like SAM-binding methyltransferase superfamily. rRNA adenine N(6)-methyltransferase family. RsmA subfamily.

It localises to the cytoplasm. It catalyses the reaction adenosine(1518)/adenosine(1519) in 16S rRNA + 4 S-adenosyl-L-methionine = N(6)-dimethyladenosine(1518)/N(6)-dimethyladenosine(1519) in 16S rRNA + 4 S-adenosyl-L-homocysteine + 4 H(+). Functionally, specifically dimethylates two adjacent adenosines (A1518 and A1519) in the loop of a conserved hairpin near the 3'-end of 16S rRNA in the 30S particle. May play a critical role in biogenesis of 30S subunits. This Serratia proteamaculans (strain 568) protein is Ribosomal RNA small subunit methyltransferase A.